We begin with the raw amino-acid sequence, 50 residues long: Large ribosomal subunit protein bL33 (50 aa).

The protein belongs to the bacterial ribosomal protein bL33 family.

The protein is Large ribosomal subunit protein bL33 of Solibacter usitatus (strain Ellin6076).